A 71-amino-acid polypeptide reads, in one-letter code: UPF0346 protein SMU_1621c (71 aa).

Belongs to the UPF0346 family.

The protein is UPF0346 protein SMU_1621c of Streptococcus mutans serotype c (strain ATCC 700610 / UA159).